Consider the following 105-residue polypeptide: uncharacterized protein (105 aa).

Transmembrane regions (helical) follow at residues 3–23 (ISPL…QALF), 41–61 (DLVN…ALVS), and 63–83 (AFPV…TFIY).

It localises to the cell membrane. This is an uncharacterized protein from Methanocaldococcus jannaschii (strain ATCC 43067 / DSM 2661 / JAL-1 / JCM 10045 / NBRC 100440) (Methanococcus jannaschii).